The following is a 345-amino-acid chain: Fe(3+) ions import ATP-binding protein FbpC (345 aa).

Positions Leu-4–Leu-236 constitute an ABC transporter domain. Gly-36–Thr-43 lines the ATP pocket.

It belongs to the ABC transporter superfamily. Fe(3+) ion importer (TC 3.A.1.10) family. As to quaternary structure, the complex is composed of two ATP-binding proteins (FbpC), two transmembrane proteins (FbpB) and a solute-binding protein (FbpA).

The protein localises to the cell inner membrane. The catalysed reaction is Fe(3+)(out) + ATP + H2O = Fe(3+)(in) + ADP + phosphate + H(+). In terms of biological role, part of the ABC transporter complex FbpABC involved in Fe(3+) ions import. Responsible for energy coupling to the transport system. This Serratia marcescens protein is Fe(3+) ions import ATP-binding protein FbpC.